Consider the following 512-residue polypeptide: Cytochrome P450 1A1 (512 aa).

A mitochondrial targeting signal region spans residues 29–40; the sequence is SRPRVPKGLKNP. S67 carries O-linked (GlcNAc) serine glycosylation. Residue F224 participates in substrate binding. C457 is a heme binding site.

The protein belongs to the cytochrome P450 family. As to quaternary structure, interacts with cytosolic chaperones HSP70 and HSP90; this interaction is required for initial targeting to mitochondria. Interacts (via mitochondrial targeting signal) with TOMM40 (via N-terminus); this interaction is required for translocation across the mitochondrial outer membrane. The cofactor is heme.

The protein localises to the endoplasmic reticulum membrane. Its subcellular location is the mitochondrion inner membrane. It localises to the microsome membrane. It is found in the cytoplasm. It catalyses the reaction an organic molecule + reduced [NADPH--hemoprotein reductase] + O2 = an alcohol + oxidized [NADPH--hemoprotein reductase] + H2O + H(+). The enzyme catalyses estrone + reduced [NADPH--hemoprotein reductase] + O2 = 2-hydroxyestrone + oxidized [NADPH--hemoprotein reductase] + H2O + H(+). The catalysed reaction is estrone + reduced [NADPH--hemoprotein reductase] + O2 = 4-hydroxyestrone + oxidized [NADPH--hemoprotein reductase] + H2O + H(+). It carries out the reaction estrone + reduced [NADPH--hemoprotein reductase] + O2 = 6alpha-hydroxyestrone + oxidized [NADPH--hemoprotein reductase] + H2O + H(+). It catalyses the reaction estrone + reduced [NADPH--hemoprotein reductase] + O2 = 15alpha-hydroxyestrone + oxidized [NADPH--hemoprotein reductase] + H2O + H(+). The enzyme catalyses estrone + reduced [NADPH--hemoprotein reductase] + O2 = 16alpha-hydroxyestrone + oxidized [NADPH--hemoprotein reductase] + H2O + H(+). The catalysed reaction is 17beta-estradiol + reduced [NADPH--hemoprotein reductase] + O2 = 2-hydroxy-17beta-estradiol + oxidized [NADPH--hemoprotein reductase] + H2O + H(+). It carries out the reaction 17beta-estradiol + reduced [NADPH--hemoprotein reductase] + O2 = 4-hydroxy-17beta-estradiol + oxidized [NADPH--hemoprotein reductase] + H2O + H(+). It catalyses the reaction 17beta-estradiol + reduced [NADPH--hemoprotein reductase] + O2 = 6alpha-hydroxy-17beta-estradiol + oxidized [NADPH--hemoprotein reductase] + H2O + H(+). The enzyme catalyses 17beta-estradiol + reduced [NADPH--hemoprotein reductase] + O2 = 7alpha-hydroxy-17beta-estradiol + oxidized [NADPH--hemoprotein reductase] + H2O + H(+). The catalysed reaction is 17beta-estradiol + reduced [NADPH--hemoprotein reductase] + O2 = 15alpha-hydroxy-17beta-estradiol + oxidized [NADPH--hemoprotein reductase] + H2O + H(+). It carries out the reaction (5Z,8Z,11Z)-eicosatrienoate + reduced [NADPH--hemoprotein reductase] + O2 = 19-hydroxy-(5Z,8Z,11Z)-eicosatrienoate + oxidized [NADPH--hemoprotein reductase] + H2O + H(+). It catalyses the reaction (5Z,8Z,11Z,14Z)-eicosatetraenoate + reduced [NADPH--hemoprotein reductase] + O2 = 16-hydroxy-(5Z,8Z,11Z,14Z)-eicosatetraenoate + oxidized [NADPH--hemoprotein reductase] + H2O + H(+). The enzyme catalyses (5Z,8Z,11Z,14Z)-eicosatetraenoate + reduced [NADPH--hemoprotein reductase] + O2 = 17-hydroxy-(5Z,8Z,11Z,14Z)-eicosatetraenoate + oxidized [NADPH--hemoprotein reductase] + H2O + H(+). The catalysed reaction is (5Z,8Z,11Z,14Z)-eicosatetraenoate + reduced [NADPH--hemoprotein reductase] + O2 = 18-hydroxy-(5Z,8Z,11Z,14Z)-eicosatetraenoate + oxidized [NADPH--hemoprotein reductase] + H2O + H(+). It carries out the reaction (5Z,8Z,11Z,14Z)-eicosatetraenoate + reduced [NADPH--hemoprotein reductase] + O2 = 19-hydroxy-(5Z,8Z,11Z,14Z)-eicosatetraenoate + oxidized [NADPH--hemoprotein reductase] + H2O + H(+). It catalyses the reaction (5Z,8Z,11Z,14Z,17Z)-eicosapentaenoate + reduced [NADPH--hemoprotein reductase] + O2 = 19-hydroxy-(5Z,8Z,11Z,14Z,17Z)-eicosapentaenoate + oxidized [NADPH--hemoprotein reductase] + H2O + H(+). The enzyme catalyses (5Z,8Z,11Z,14Z)-eicosatetraenoate + reduced [NADPH--hemoprotein reductase] + O2 = (8R,9S)-epoxy-(5Z,11Z,14Z)-eicosatrienoate + oxidized [NADPH--hemoprotein reductase] + H2O + H(+). The catalysed reaction is (5Z,8Z,11Z,14Z)-eicosatetraenoate + reduced [NADPH--hemoprotein reductase] + O2 = (11R,12S)-epoxy-(5Z,8Z,14Z)-eicosatrienoate + oxidized [NADPH--hemoprotein reductase] + H2O + H(+). It carries out the reaction (5Z,8Z,11Z,14Z)-eicosatetraenoate + reduced [NADPH--hemoprotein reductase] + O2 = (14S,15R)-epoxy-(5Z,8Z,11Z)-eicosatrienoate + oxidized [NADPH--hemoprotein reductase] + H2O + H(+). It catalyses the reaction (5Z,8Z,11Z,14Z)-eicosatetraenoate + reduced [NADPH--hemoprotein reductase] + O2 = (14R,15S)-epoxy-(5Z,8Z,11Z)-eicosatrienoate + oxidized [NADPH--hemoprotein reductase] + H2O + H(+). The enzyme catalyses (5Z,8Z,11Z,14Z,17Z)-eicosapentaenoate + reduced [NADPH--hemoprotein reductase] + O2 = (17R,18S)-epoxy-(5Z,8Z,11Z,14Z)-eicosatetraenoate + oxidized [NADPH--hemoprotein reductase] + H2O + H(+). The catalysed reaction is (4Z,7Z,10Z,13Z,16Z,19Z)-docosahexaenoate + reduced [NADPH--hemoprotein reductase] + O2 = (19S,20R)-epoxy-(4Z,7Z,10Z,13Z,16Z)-docosapentaenoate + oxidized [NADPH--hemoprotein reductase] + H2O + H(+). It carries out the reaction (4Z,7Z,10Z,13Z,16Z,19Z)-docosahexaenoate + reduced [NADPH--hemoprotein reductase] + O2 = (19R,20S)-epoxy-(4Z,7Z,10Z,13Z,16Z)-docosapentaenoate + oxidized [NADPH--hemoprotein reductase] + H2O + H(+). It catalyses the reaction all-trans-retinol + reduced [NADPH--hemoprotein reductase] + O2 = all-trans-retinal + oxidized [NADPH--hemoprotein reductase] + 2 H2O + H(+). The enzyme catalyses all-trans-retinal + reduced [NADPH--hemoprotein reductase] + O2 = all-trans-retinoate + oxidized [NADPH--hemoprotein reductase] + H2O + 2 H(+). The catalysed reaction is (13S)-hydroperoxy-(9Z,11E)-octadecadienoate = 13-oxo-(9Z,11E)-octadecadienoate + H2O. It carries out the reaction (12S)-hydroperoxy-(5Z,8Z,10E,14Z)-eicosatetraenoate = 12-oxo-(5Z,8Z,10E,14Z)-eicosatetraenoate + H2O. It catalyses the reaction (15S)-hydroperoxy-(5Z,8Z,11Z,13E)-eicosatetraenoate = 15-oxo-(5Z,8Z,11Z,13E)-eicosatetraenoate + H2O. The enzyme catalyses (5S)-hydroperoxy-(6E,8Z,11Z,14Z)-eicosatetraenoate = 5-oxo-(6E,8Z,11Z,14Z)-eicosatetraenoate + H2O. Its pathway is steroid hormone biosynthesis. It functions in the pathway lipid metabolism; fatty acid metabolism. The protein operates within cofactor metabolism; retinol metabolism. In terms of biological role, a cytochrome P450 monooxygenase involved in the metabolism of various endogenous substrates, including fatty acids, steroid hormones and vitamins. Mechanistically, uses molecular oxygen inserting one oxygen atom into a substrate, and reducing the second into a water molecule, with two electrons provided by NADPH via cytochrome P450 reductase (CPR; NADPH-ferrihemoprotein reductase). Catalyzes the hydroxylation of carbon-hydrogen bonds. Exhibits high catalytic activity for the formation of hydroxyestrogens from estrone (E1) and 17beta-estradiol (E2), namely 2-hydroxy E1 and E2, as well as D-ring hydroxylated E1 and E2 at the C15alpha and C16alpha positions. Displays different regioselectivities for polyunsaturated fatty acids (PUFA) hydroxylation. Catalyzes the epoxidation of double bonds of certain PUFA. Converts arachidonic acid toward epoxyeicosatrienoic acid (EET) regioisomers, 8,9-, 11,12-, and 14,15-EET, that function as lipid mediators in the vascular system. Displays an absolute stereoselectivity in the epoxidation of eicosapentaenoic acid (EPA) producing the 17(R),18(S) enantiomer. May play an important role in all-trans retinoic acid biosynthesis in extrahepatic tissues. Catalyzes two successive oxidative transformation of all-trans retinol to all-trans retinal and then to the active form all-trans retinoic acid. May also participate in eicosanoids metabolism by converting hydroperoxide species into oxo metabolites (lipoxygenase-like reaction, NADPH-independent). In Macaca mulatta (Rhesus macaque), this protein is Cytochrome P450 1A1 (CYP1A1).